Here is a 428-residue protein sequence, read N- to C-terminus: Glutamate-1-semialdehyde 2,1-aminomutase (428 aa).

At K265 the chain carries N6-(pyridoxal phosphate)lysine.

The protein belongs to the class-III pyridoxal-phosphate-dependent aminotransferase family. HemL subfamily. Homodimer. The cofactor is pyridoxal 5'-phosphate.

The protein resides in the cytoplasm. The catalysed reaction is (S)-4-amino-5-oxopentanoate = 5-aminolevulinate. It participates in porphyrin-containing compound metabolism; protoporphyrin-IX biosynthesis; 5-aminolevulinate from L-glutamyl-tRNA(Glu): step 2/2. The sequence is that of Glutamate-1-semialdehyde 2,1-aminomutase from Shewanella woodyi (strain ATCC 51908 / MS32).